The primary structure comprises 391 residues: UPF0229 protein BCB4264_A0587 (391 aa).

The span at 1 to 16 shows a compositional bias: polar residues; it reads MGEENQPNYTISQENW. Disordered stretches follow at residues 1-31 and 80-117; these read MGEENQPNYTISQENWSLHRKGYDDQQRHQE and HVGQGNGDSKVGDVVARDGSGGQKQKGPGKGQGAGDAA. Residues 21–31 show a composition bias toward basic and acidic residues; that stretch reads KGYDDQQRHQE. Positions 98–115 are enriched in gly residues; the sequence is GSGGQKQKGPGKGQGAGD.

Belongs to the UPF0229 family.

This is UPF0229 protein BCB4264_A0587 from Bacillus cereus (strain B4264).